Here is a 480-residue protein sequence, read N- to C-terminus: Glycogen synthase (480 aa).

K15 lines the ADP-alpha-D-glucose pocket.

The protein belongs to the glycosyltransferase 1 family. Bacterial/plant glycogen synthase subfamily.

The enzyme catalyses [(1-&gt;4)-alpha-D-glucosyl](n) + ADP-alpha-D-glucose = [(1-&gt;4)-alpha-D-glucosyl](n+1) + ADP + H(+). It functions in the pathway glycan biosynthesis; glycogen biosynthesis. In terms of biological role, synthesizes alpha-1,4-glucan chains using ADP-glucose. The chain is Glycogen synthase from Granulibacter bethesdensis (strain ATCC BAA-1260 / CGDNIH1).